Consider the following 370-residue polypeptide: Chaperone protein DnaJ (370 aa).

The J domain maps to 6–70 (DYYEVLGVQR…EKRSMYDRFG (65 aa)). The CR-type zinc finger occupies 128-208 (GVEKTIEFRR…CRGEGRVRQT (81 aa)). Zn(2+) is bound by residues Cys-141, Cys-144, Cys-158, Cys-161, Cys-182, Cys-185, Cys-196, and Cys-199. CXXCXGXG motif repeat units follow at residues 141 to 148 (CPACRGSG), 158 to 165 (CPKCGGLG), 182 to 189 (CDMCRGEG), and 196 to 203 (CRECRGEG).

Belongs to the DnaJ family. As to quaternary structure, homodimer. Requires Zn(2+) as cofactor.

The protein resides in the cytoplasm. In terms of biological role, participates actively in the response to hyperosmotic and heat shock by preventing the aggregation of stress-denatured proteins and by disaggregating proteins, also in an autonomous, DnaK-independent fashion. Unfolded proteins bind initially to DnaJ; upon interaction with the DnaJ-bound protein, DnaK hydrolyzes its bound ATP, resulting in the formation of a stable complex. GrpE releases ADP from DnaK; ATP binding to DnaK triggers the release of the substrate protein, thus completing the reaction cycle. Several rounds of ATP-dependent interactions between DnaJ, DnaK and GrpE are required for fully efficient folding. Also involved, together with DnaK and GrpE, in the DNA replication of plasmids through activation of initiation proteins. The chain is Chaperone protein DnaJ from Roseiflexus sp. (strain RS-1).